A 125-amino-acid polypeptide reads, in one-letter code: Ly6/PLAUR domain-containing protein 2 (125 aa).

The N-terminal stretch at 1–22 (MRGTRLALLALVLAACGELAPA) is a signal peptide. In terms of domain architecture, UPAR/Ly6 spans 25–100 (CYVCPEPTGV…VSCCNTELCN (76 aa)). Asparagine 46 carries an N-linked (GlcNAc...) asparagine glycan. A lipid anchor (GPI-anchor amidated glycine) is attached at glycine 103. The propeptide at 104 to 125 (APALNSLHCGALTLLPLLSLRL) is removed in mature form.

The protein localises to the cell membrane. This is Ly6/PLAUR domain-containing protein 2 (LYPD2) from Homo sapiens (Human).